A 378-amino-acid chain; its full sequence is Anhydro-N-acetylmuramic acid kinase (378 aa).

23-30 (GTSMDGAD) lines the ATP pocket.

It belongs to the anhydro-N-acetylmuramic acid kinase family.

It carries out the reaction 1,6-anhydro-N-acetyl-beta-muramate + ATP + H2O = N-acetyl-D-muramate 6-phosphate + ADP + H(+). It participates in amino-sugar metabolism; 1,6-anhydro-N-acetylmuramate degradation. Its pathway is cell wall biogenesis; peptidoglycan recycling. Catalyzes the specific phosphorylation of 1,6-anhydro-N-acetylmuramic acid (anhMurNAc) with the simultaneous cleavage of the 1,6-anhydro ring, generating MurNAc-6-P. Is required for the utilization of anhMurNAc either imported from the medium or derived from its own cell wall murein, and thus plays a role in cell wall recycling. This is Anhydro-N-acetylmuramic acid kinase from Bordetella bronchiseptica (strain ATCC BAA-588 / NCTC 13252 / RB50) (Alcaligenes bronchisepticus).